A 506-amino-acid chain; its full sequence is MSEHFILQPGQLSLVSIKQILDEELSCVLAEHAFELIRASHQTVKKVIDEKKTVYGINTGFGSLANQTISSDCLKELQRNIVLSHACGTGKLLPDSVVALILLLKINNLSQGYSGVRLELINALIALFNHKVYPCIPSKGSVGASGDLVPLAHLSLPLLGEGEVRHQGQVISAEEGLKLAGLKPLELEAKEGLALLNGLQVSTALALSALFISETLFETAIISGSLSVDAASGSDVPFDDRIHQIRGHQAQISAASMYRNLLAGSQIRESHRHCNRVQDPYSLRCQPQIMGAVLHQMQFVGQTLQVEANAISDNPLVFAEQGDILSGGNFHGEIIAMAADNLALALSEIGGSAERRIALLIDKNFSGLPAFLVRESGLNSGFMIAHVTAASCASDNKALAHPHSVDSLPTSANQEDHVSMATSAARRLHEMIDNTSTILAIELLAACQGLEFHKPLKTSPQLDKIYQSVRSVVKEYDKDRYFAPDIEKIKKKILDKEFSLLTLTNE.

Residues 144 to 146 constitute a cross-link (5-imidazolinone (Ala-Gly)); that stretch reads ASG. Ser-145 carries the 2,3-didehydroalanine (Ser) modification.

It belongs to the PAL/histidase family. Post-translationally, contains an active site 4-methylidene-imidazol-5-one (MIO), which is formed autocatalytically by cyclization and dehydration of residues Ala-Ser-Gly.

The protein localises to the cytoplasm. The catalysed reaction is L-histidine = trans-urocanate + NH4(+). The protein operates within amino-acid degradation; L-histidine degradation into L-glutamate; N-formimidoyl-L-glutamate from L-histidine: step 1/3. This is Histidine ammonia-lyase from Legionella pneumophila (strain Paris).